A 63-amino-acid chain; its full sequence is SSWQKAGISFNKYLAIAARTVQRSLKNDLKVAAEKRYISDAKVQKLEKGNVVSTTDLASNKSA.

In terms of assembly, F-type ATP synthases have 2 components, the catalytic core F(1) and the membrane-embedded component F(0), linked together by a central stalk and a peripheral stalk. The central stalk, also called rotor shaft, is often seen as part of F(1). The peripheral stalk is seen as part of F(0). F(0) contains the membrane channel next to the rotor. F-type ATP synthases form dimers but each monomer functions independently in ATP generation. The dimer consists of 18 different polypeptides: ATP1 (subunit alpha, part of F(1), 3 molecules per monomer), ATP2 (subunit beta, part of F(1), 3 molecules per monomer), ATP3 (subunit gamma, part of the central stalk), ATP4 (subunit b, part of the peripheral stalk), ATP5/OSCP (subunit 5/OSCP, part of the peripheral stalk), ATP6 (subunit a, part of the peripheral stalk), ATP7 (subunit d, part of the peripheral stalk), ATP8 (subunit 8, part of the peripheral stalk), OLI1 (subunit c, part of the rotor, 10 molecules per monomer), ATP14 (subunit h, part of the peripheral stalk), ATP15 (subunit epsilon, part of the central stalk), ATP16 (subunit delta, part of the central stalk), ATP17 (subunit f, part of the peripheral stalk), ATP18 (subunit i/j, part of the peripheral stalk). Dimer-specific subunits are ATP19 (subunit k, at interface between monomers), ATP20 (subunit g, at interface between monomers), TIM11 (subunit e, at interface between monomers). Also contains subunit L.

Its subcellular location is the mitochondrion inner membrane. In terms of biological role, mitochondrial membrane ATP synthase (F(1)F(0) ATP synthase or Complex V) produces ATP from ADP in the presence of a proton gradient across the membrane which is generated by electron transport complexes of the respiratory chain. F-type ATP synthases consist of two structural domains, F(1) - containing the extramembraneous catalytic core, and F(0) - containing the membrane proton channel, linked together by a central stalk and a peripheral stalk. During catalysis, ATP synthesis in the catalytic domain of F(1) is coupled via a rotary mechanism of the central stalk subunits to proton translocation. Part of the complex F(1) domain and the central stalk which is part of the complex rotary element. Rotation of the central stalk against the surrounding alpha/ATP1(3)beta/ATP2(3) subunits leads to hydrolysis of ATP in three separate catalytic sites on the beta/ATP2 subunits. The chain is ATP synthase subunit epsilon, mitochondrial from Pichia angusta (Yeast).